The sequence spans 793 residues: Translocase of chloroplast 90, chloroplastic (793 aa).

A disordered region spans residues 22–59 (LGSDPFFRDPHQEQDNHSQAPAAPQPVTLSEPPCSTSS). The segment covering 27–37 (FFRDPHQEQDN) has biased composition (basic and acidic residues). Positions 130-157 (LIRAEESELKNVKLRQDRAKALAREQES) form a coiled coil. Residues 164-394 (DFSLRILVLG…FRDSIGLGQP (231 aa)) enclose the AIG1-type G domain. The segment at 173–180 (GKTGVGKS) is G1. GTP is bound by residues 176–181 (GVGKSA) and 195–200 (DAFRPG). S180 is a binding site for Mg(2+). Residues 195–198 (DAFR) form a homodimerization region. The tract at residues 199 to 203 (PGTDR) is G2. A G3 region spans residues 220-223 (DTPG). Positions 259–264 (RLDMID) are homodimerization. The helical transmembrane segment at 279–297 (IFGAAIWLNTILVMTHSAA) threads the bilayer. The G4 stretch occupies residues 293 to 296 (THSA). GTP is bound by residues H294 and 341–342 (EN). The segment at 341-343 (ENH) is G5. 2 coiled-coil regions span residues 410 to 442 (LRRR…YDQL) and 477 to 503 (KKQL…DTEQ).

Belongs to the TRAFAC class TrmE-Era-EngA-EngB-Septin-like GTPase superfamily. AIG1/Toc34/Toc159-like paraseptin GTPase family. TOC159 subfamily. As to quaternary structure, homodimer. Part of the TOC core complex that includes 1 protein for the specific recognition of transit peptides surrounded by a ring composed of four proteins forming translocation channels, and four to five GTP-binding proteins providing energy. This core complex can interact with components of the TIC complex to form a larger import complex. Chloroplastic protein precursor such as prSS (precursor of the RuBisCO small subunit) interacts with these complexes. The TOC complex contains a specific subset of polar lipids such as digalactosyldiacylglyceride (DGDG), phosphatidylcholine (PC) and phosphatidylglycerol (PG). Interacts with TOC33 and TOC75. Mg(2+) serves as cofactor. Expressed in seedlings, leaves, flowers, and roots.

The protein localises to the plastid. The protein resides in the chloroplast outer membrane. It is found in the cytoplasm. Its function is as follows. GTPase involved in protein precursor import into chloroplasts. Seems to recognize chloroplast-destined precursor proteins and regulate their presentation to the translocation channel through GTP hydrolysis. Probably specialized in the import of nuclear encoded photosynthetic preproteins from the cytoplasm to the chloroplast. This Arabidopsis thaliana (Mouse-ear cress) protein is Translocase of chloroplast 90, chloroplastic (TOC90).